The chain runs to 55 residues: Large ribosomal subunit protein bL33 (55 aa).

This sequence belongs to the bacterial ribosomal protein bL33 family.

The polypeptide is Large ribosomal subunit protein bL33 (Sinorhizobium medicae (strain WSM419) (Ensifer medicae)).